A 1008-amino-acid chain; its full sequence is CRAL-TRIO domain-containing protein C23B6.04c (1008 aa).

3 disordered regions span residues 1–247 (MKDS…AKSE), 284–306 (DGRDTSLGDASVNEAAKETDVDS), and 374–514 (QKVV…ASAK). The span at 79–110 (TVHTKTGSSSSPASKMRNTVNLQHIQAANQKT) shows a compositional bias: polar residues. Composition is skewed to basic and acidic residues over residues 111-131 (RNAEGERKVAQRRVQSDKAEA) and 170-187 (MNDKINVDEAAAKSDSKL). Composition is skewed to polar residues over residues 374 to 389 (QKVVQNSPPSLLSTDN), 397 to 432 (DHPSSQDNSSKASLVENSQTQSSTPRKPLPTTTSPK), 467 to 478 (GGNSVTAPSTPS), and 495 to 505 (GRSSTAPSTPN). Phosphoserine is present on residues Ser525 and Ser559. The 154-residue stretch at 675 to 828 (EIQEENATGK…NFGGSLHFEY (154 aa)) folds into the CRAL-TRIO domain. The disordered stretch occupies residues 883–982 (SLTNRSSSPT…KSGSGVSETP (100 aa)). A compositionally biased stretch (low complexity) spans 885–899 (TNRSSSPTVTPTVNT). Ser888 and Ser890 each carry phosphoserine. The span at 914-931 (SPQKRRVENPKPVVKDEG) shows a compositional bias: basic and acidic residues.

The protein localises to the cell membrane. In Schizosaccharomyces pombe (strain 972 / ATCC 24843) (Fission yeast), this protein is CRAL-TRIO domain-containing protein C23B6.04c.